Here is a 744-residue protein sequence, read N- to C-terminus: Tripartite motif-containing protein 2 (744 aa).

Phosphoserine is present on Ser10. An RING-type zinc finger spans residues 23 to 64 (CSICLERYKNPKVLPCLHTFCERCLQNYIPAHSLTLSCPVCR). The B box-type zinc finger occupies 113-154 (GKPLSCPNHDGNVMDFYCQSCETAMCRECTEGEHAEHPTVPL). Zn(2+)-binding residues include Cys118, His121, Cys141, and His146. Residues 320–421 (TTNAVASETV…IRGSPFKLKV (102 aa)) form a Filamin repeat. Thr371 is subject to Phosphothreonine. Phosphoserine occurs at positions 375, 424, and 428. The interval 432–462 (EGVKRRVKSPGSGHVKQKAVKRPASMYSTGK) is disordered. NHL repeat units follow at residues 473–516 (IFRV…FSND), 520–563 (KSRF…FSSD), 564–605 (GKFK…FQPN), 609–652 (VTRF…FNQE), 656–699 (MLKF…FDGS), and 700–743 (GSFL…YRYL).

The protein belongs to the TRIM/RBCC family. As to quaternary structure, forms homooligomers. Interacts with TRIM3; this interaction reduces TRIM2 activity. Interacts with myosin V; myosin V may not be a substrate for ubiquitination. Interacts with NEFL. Interacts with phosphorylated BCL2L11. Interacts with SIRPA. Post-translationally, RING-type zinc finger-dependent and UBE2D1-dependent autoubiquitination.

The protein resides in the cytoplasm. The catalysed reaction is S-ubiquitinyl-[E2 ubiquitin-conjugating enzyme]-L-cysteine + [acceptor protein]-L-lysine = [E2 ubiquitin-conjugating enzyme]-L-cysteine + N(6)-ubiquitinyl-[acceptor protein]-L-lysine.. Its pathway is protein modification; protein ubiquitination. Its function is as follows. UBE2D1-dependent E3 ubiquitin-protein ligase that mediates the ubiquitination of NEFL and of phosphorylated BCL2L11. Plays a neuroprotective function. May play a role in neuronal rapid ischemic tolerance. Plays a role in antiviral immunity and limits New World arenavirus infection independently of its ubiquitin ligase activity. The sequence is that of Tripartite motif-containing protein 2 (TRIM2) from Bos taurus (Bovine).